The sequence spans 253 residues: BRI3-binding protein (253 aa).

A run of 4 helical transmembrane segments spans residues 19–39 (VLLP…PGAQ), 131–151 (ALVL…TLGF), 164–181 (FWLV…YILH), and 190–210 (AVLP…MGYW). Residues 219–253 (SPSVEEKLEHLENQVRLLNIRLNRVLENLDRSKDK) are a coiled coil. Position 250 is a phosphoserine (S250).

Interacts with LETMD1. Interacts with BRI3. Interacts with BRI3; the interaction is weak. Interacts with TMEM238L.

The protein localises to the mitochondrion outer membrane. In terms of biological role, involved in tumorigenesis and may function by stabilizing p53/TP53. This Mus musculus (Mouse) protein is BRI3-binding protein.